Consider the following 72-residue polypeptide: Translation initiation factor IF-1 (72 aa).

Residues 1–72 (MSKTDVVEIE…TKGRIIWRDK (72 aa)) form the S1-like domain.

This sequence belongs to the IF-1 family. In terms of assembly, component of the 30S ribosomal translation pre-initiation complex which assembles on the 30S ribosome in the order IF-2 and IF-3, IF-1 and N-formylmethionyl-tRNA(fMet); mRNA recruitment can occur at any time during PIC assembly.

It localises to the cytoplasm. One of the essential components for the initiation of protein synthesis. Stabilizes the binding of IF-2 and IF-3 on the 30S subunit to which N-formylmethionyl-tRNA(fMet) subsequently binds. Helps modulate mRNA selection, yielding the 30S pre-initiation complex (PIC). Upon addition of the 50S ribosomal subunit IF-1, IF-2 and IF-3 are released leaving the mature 70S translation initiation complex. The chain is Translation initiation factor IF-1 from Lachnoclostridium phytofermentans (strain ATCC 700394 / DSM 18823 / ISDg) (Clostridium phytofermentans).